The following is a 335-amino-acid chain: Legumin type B (335 aa).

2 disordered regions span residues 47–87 and 102–155; these read PETQ…GNSV and TEED…GRNG. The segment covering 105–118 has biased composition (basic and acidic residues); that stretch reads DTAKRLRSPRDKRN. The segment covering 135–144 has biased composition (acidic residues); that stretch reads QQEEEEEEEE. The 148-residue stretch at 167–314 folds into the Cupin type-1 domain; that stretch reads ENIAQPARAD…AFGLRQRQVT (148 aa).

This sequence belongs to the 11S seed storage protein (globulins) family. Hexamer; each subunit is composed of an acidic and a basic chain derived from a single precursor and linked by a disulfide bond.

Its function is as follows. This protein found in the seeds of many leguminous and non-leguminous plants is the source of sulfur-containing amino acids in seed meals. This Vicia faba (Broad bean) protein is Legumin type B (LEB2).